Consider the following 603-residue polypeptide: UvrABC system protein C (603 aa).

Residues 13-92 (NGPGVYLMKD…IRKHKPRYNI (80 aa)) form the GIY-YIG domain. A UVR domain is found at 202-237 (NDLLQKIKEQMAAASERQEYELAARLRDRMFAIQAT).

The protein belongs to the UvrC family. Interacts with UvrB in an incision complex.

The protein resides in the cytoplasm. In terms of biological role, the UvrABC repair system catalyzes the recognition and processing of DNA lesions. UvrC both incises the 5' and 3' sides of the lesion. The N-terminal half is responsible for the 3' incision and the C-terminal half is responsible for the 5' incision. The protein is UvrABC system protein C of Desulfatibacillum aliphaticivorans.